The sequence spans 433 residues: Enolase (433 aa).

Gln-164 is a binding site for (2R)-2-phosphoglycerate. Catalysis depends on Glu-206, which acts as the Proton donor. Mg(2+) contacts are provided by Asp-243, Glu-289, and Asp-316. (2R)-2-phosphoglycerate is bound by residues Lys-341, Arg-370, Ser-371, and Lys-392. Lys-341 acts as the Proton acceptor in catalysis.

This sequence belongs to the enolase family. Mg(2+) serves as cofactor.

Its subcellular location is the cytoplasm. It localises to the secreted. The protein resides in the cell surface. The enzyme catalyses (2R)-2-phosphoglycerate = phosphoenolpyruvate + H2O. The protein operates within carbohydrate degradation; glycolysis; pyruvate from D-glyceraldehyde 3-phosphate: step 4/5. Its function is as follows. Catalyzes the reversible conversion of 2-phosphoglycerate (2-PG) into phosphoenolpyruvate (PEP). It is essential for the degradation of carbohydrates via glycolysis. The polypeptide is Enolase (Borreliella afzelii (strain PKo) (Borrelia afzelii)).